The sequence spans 267 residues: Acetyl-coenzyme A carboxylase carboxyl transferase subunit beta 1 (267 aa).

Positions 9–267 (TWQACPKCGR…NYGIGRSAHG (259 aa)) constitute a CoA carboxyltransferase N-terminal domain. 4 residues coordinate Zn(2+): C13, C16, C31, and C34. A C4-type zinc finger spans residues 13 to 34 (CPKCGRHVHQRQWGTYQQCPYC).

It belongs to the AccD/PCCB family. Acetyl-CoA carboxylase is a heterohexamer composed of biotin carboxyl carrier protein (AccB), biotin carboxylase (AccC) and two subunits each of ACCase subunit alpha (AccA) and ACCase subunit beta (AccD). Requires Zn(2+) as cofactor.

It is found in the cytoplasm. The enzyme catalyses N(6)-carboxybiotinyl-L-lysyl-[protein] + acetyl-CoA = N(6)-biotinyl-L-lysyl-[protein] + malonyl-CoA. The protein operates within lipid metabolism; malonyl-CoA biosynthesis; malonyl-CoA from acetyl-CoA: step 1/1. In terms of biological role, component of the acetyl coenzyme A carboxylase (ACC) complex. Biotin carboxylase (BC) catalyzes the carboxylation of biotin on its carrier protein (BCCP) and then the CO(2) group is transferred by the transcarboxylase to acetyl-CoA to form malonyl-CoA. The chain is Acetyl-coenzyme A carboxylase carboxyl transferase subunit beta 1 from Lactiplantibacillus plantarum (strain ATCC BAA-793 / NCIMB 8826 / WCFS1) (Lactobacillus plantarum).